The primary structure comprises 208 residues: Holliday junction resolvase RecU (208 aa).

The Mg(2+) site is built by Thr-86, Asp-88, Glu-101, and Gln-120.

Belongs to the RecU family. Mg(2+) serves as cofactor.

The protein resides in the cytoplasm. It catalyses the reaction Endonucleolytic cleavage at a junction such as a reciprocal single-stranded crossover between two homologous DNA duplexes (Holliday junction).. Functionally, endonuclease that resolves Holliday junction intermediates in genetic recombination. Cleaves mobile four-strand junctions by introducing symmetrical nicks in paired strands. Promotes annealing of linear ssDNA with homologous dsDNA. Required for DNA repair, homologous recombination and chromosome segregation. The polypeptide is Holliday junction resolvase RecU (Lacticaseibacillus casei (strain BL23) (Lactobacillus casei)).